The sequence spans 109 residues: Urocortin-2 (109 aa).

An N-terminal signal peptide occupies residues 1–22 (MTRWALVVFMVLMLDRVPGTPI). A propeptide spanning residues 23–67 (PTFQLLPQNYPETTPSSVSSESPSDTTTGPSASWSNSKASPYLDT) is cleaved from the precursor. The interval 24–60 (TFQLLPQNYPETTPSSVSSESPSDTTTGPSASWSNSK) is disordered. Residues 33–50 (PETTPSSVSSESPSDTTT) are compositionally biased toward low complexity. Positions 51 to 60 (GPSASWSNSK) are enriched in polar residues. The residue at position 106 (Val-106) is a Valine amide; partial.

This sequence belongs to the sauvagine/corticotropin-releasing factor/urotensin I family. As to quaternary structure, binds with high affinity to CRF receptors 2-alpha and 2-beta. In terms of processing, glycosylated.

It is found in the secreted. Its function is as follows. Suppresses food intake, delays gastric emptying and decreases heat-induced edema. Might represent an endogenous ligand for maintaining homeostasis after stress. The chain is Urocortin-2 (Ucn2) from Rattus norvegicus (Rat).